Here is an 89-residue protein sequence, read N- to C-terminus: Small ribosomal subunit protein uS14 (89 aa).

Belongs to the universal ribosomal protein uS14 family. In terms of assembly, part of the 30S ribosomal subunit. Contacts proteins S3 and S10.

Binds 16S rRNA, required for the assembly of 30S particles and may also be responsible for determining the conformation of the 16S rRNA at the A site. The polypeptide is Small ribosomal subunit protein uS14 (Azobacteroides pseudotrichonymphae genomovar. CFP2).